Here is a 588-residue protein sequence, read N- to C-terminus: MFS siderochrome iron transporter 1 (588 aa).

The next 13 helical transmembrane spans lie at 60–80 (QVWSKGHLIFAYVMIWVITFV), 104–124 (LTASTMIMSNIIGGLIKLPLA), 133–153 (PQGFLIMVGALTIGLVMMAAC), 161–181 (AAQVFYWVGYNGMSYTISIFI), 191–211 (ALMFAFVSSPYIATVWVGGPL), 225–245 (YGAFAIITPAITCPLYAVFAW), 278–298 (IIGIILLASGLALFLLPFSLY), 307–327 (SSLVISMIIVGGLLLIAFALY), 348–368 (LGACILAASLFVSFYIWDSYF), 385–405 (YIVNIYSIGACFWSIIVGILV), 413–433 (WLALYFGVPLTILGVGLMITF), 440–460 (IGYIIMCQIFIAFAGGTCVIT), and 473–495 (YVAVVLAVESMFANIGGAIGQTV). Asparagine 519 carries N-linked (GlcNAc...) asparagine glycosylation. Residues 552-572 (KYMLIGGTAILAVGLGATMMW) traverse the membrane as a helical segment.

The protein belongs to the major facilitator superfamily.

It localises to the membrane. Its function is as follows. Major facilitator transporter involved in siderophore transport. This is MFS siderochrome iron transporter 1 from Ajellomyces capsulatus (Darling's disease fungus).